The sequence spans 259 residues: Small ribosomal subunit protein eS1 (259 aa).

Disordered regions lie at residues Met-1–Asp-23 and Glu-235–Val-259. Basic residues predominate over residues Lys-8–Lys-19. Positions Ser-246–Val-259 are enriched in basic and acidic residues.

It belongs to the eukaryotic ribosomal protein eS1 family. Component of the small ribosomal subunit. Mature ribosomes consist of a small (40S) and a large (60S) subunit. The 40S subunit contains about 33 different proteins and 1 molecule of RNA (18S). The 60S subunit contains about 49 different proteins and 3 molecules of RNA (28S, 5.8S and 5S).

It is found in the cytoplasm. This chain is Small ribosomal subunit protein eS1, found in Schistosoma japonicum (Blood fluke).